Reading from the N-terminus, the 329-residue chain is Terpene synthase 7 (329 aa).

Positions 99 to 104 (DDLYLE) match the DDxx(x)D/E motif motif. An NDxxSxxxD/E motif motif is present at residues 230 to 238 (NDIHSFNKE).

The protein belongs to the terpene synthase family.

Its function is as follows. Terpene synthase that converts its substrate farnesyl diphosphate (FPP) into 6 yet unidentified sesquiterpenes. This Dictyostelium purpureum (Slime mold) protein is Terpene synthase 7.